We begin with the raw amino-acid sequence, 111 residues long: MASNQELACVYAALILQDDEVAITGEKIATLLKAANVEFEPYWPGLFAKALEGVDVKNLITSVSSGAGSGPAPAAAAAAPAAGGAAPAAETKKKEEPKEESDDDMGFGLFD.

A compositionally biased stretch (low complexity) spans 65 to 89; the sequence is SGAGSGPAPAAAAAAPAAGGAAPAA. The interval 65-111 is disordered; sequence SGAGSGPAPAAAAAAPAAGGAAPAAETKKKEEPKEESDDDMGFGLFD.

The protein belongs to the eukaryotic ribosomal protein P1/P2 family. P1 and P2 exist as dimers at the large ribosomal subunit.

Functionally, plays an important role in the elongation step of protein synthesis. This is Large ribosomal subunit protein P1 from Caenorhabditis elegans.